Consider the following 329-residue polypeptide: GTP 3',8-cyclase (329 aa).

Residues 1–229 (MNPVDYLRIS…ESTIKGNGPA (229 aa)) form the Radical SAM core domain. GTP is bound at residue Arg8. Cys15 and Cys19 together coordinate [4Fe-4S] cluster. Residue Tyr21 coordinates S-adenosyl-L-methionine. A [4Fe-4S] cluster-binding site is contributed by Cys22. Residue Arg60 coordinates GTP. Gly64 is a binding site for S-adenosyl-L-methionine. Residue Thr91 coordinates GTP. Residue Ser115 coordinates S-adenosyl-L-methionine. Lys155 serves as a coordination point for GTP. Met189 lines the S-adenosyl-L-methionine pocket. The [4Fe-4S] cluster site is built by Cys252 and Cys255. 257–259 (RMR) contributes to the GTP binding site. [4Fe-4S] cluster is bound at residue Cys269.

The protein belongs to the radical SAM superfamily. MoaA family. As to quaternary structure, monomer and homodimer. It depends on [4Fe-4S] cluster as a cofactor.

The enzyme catalyses GTP + AH2 + S-adenosyl-L-methionine = (8S)-3',8-cyclo-7,8-dihydroguanosine 5'-triphosphate + 5'-deoxyadenosine + L-methionine + A + H(+). It participates in cofactor biosynthesis; molybdopterin biosynthesis. Catalyzes the cyclization of GTP to (8S)-3',8-cyclo-7,8-dihydroguanosine 5'-triphosphate. The sequence is that of GTP 3',8-cyclase from Rippkaea orientalis (strain PCC 8801 / RF-1) (Cyanothece sp. (strain PCC 8801)).